The sequence spans 339 residues: Transcription initiation factor IIB (339 aa).

The segment at 39–70 (EELICPVCGSKSIIKDYERAEIVCEMCGCVLQ) adopts a TFIIB-type zinc-finger fold. Zn(2+) is bound by residues Cys-43, Cys-46, Cys-62, and Cys-65. 2 tandem repeats follow at residues 156–239 (SELD…SREL) and 250–331 (DYVP…ELTE).

Belongs to the TFIIB family.

In terms of biological role, stabilizes TBP binding to an archaeal box-A promoter. Also responsible for recruiting RNA polymerase II to the pre-initiation complex (DNA-TBP-TFIIB). The sequence is that of Transcription initiation factor IIB from Methanococcus maripaludis (strain DSM 14266 / JCM 13030 / NBRC 101832 / S2 / LL).